Here is a 2531-residue protein sequence, read N- to C-terminus: Neurogenic locus notch homolog protein 1 (2531 aa).

Residues 1–18 (MPRLLAPLLCLTLLPALA) form the signal peptide. At 19–1725 (ARGLRCSQPS…VEPPLPSQLH (1707 aa)) the chain is on the extracellular side. EGF-like domains are found at residues 20 to 58 (RGLRCSQPSGTCLNGGRCEVANGTEACVCSGAFVGQRCQ), 59 to 99 (DPSP…PLCL), 102 to 139 (LANACLANPCRNGGTCDLLTLTEYKCRCPPGWSGKSCQ), and 140 to 176 (QADPCASNPCANGGQCLPFESSYICGCPPGFHGPTCR). Cystine bridges form between C24-C37, C31-C46, C48-C57, C63-C74, C68-C87, C89-C98, C106-C117, C111-C127, C129-C138, C144-C155, C149-C164, C166-C175, C182-C195, C189-C204, C206-C215, C222-C233, C227-C243, C245-C254, C261-C272, C266-C281, C283-C292, C299-C312, C306-C321, C323-C332, C339-C350, C344-C359, C361-C370, C376-C387, C381-C398, C400-C409, C416-C429, C423-C438, and C440-C449. N41 carries N-linked (GlcNAc...) asparagine glycosylation. S65 carries an O-linked (Glc...) serine glycan. A glycan (O-linked (Fuc...) threonine) is linked at T73. T116 is a glycosylation site (O-linked (Fuc...) threonine). O-linked (Glc...) serine glycosylation is present at S146. Residues 178 to 216 (DVNECSQNPGLCRHGGTCHNEIGSYRCACRATHTGPHCE) form the EGF-like 5; calcium-binding domain. Residue T194 is glycosylated (O-linked (Fuc...) threonine). One can recognise an EGF-like 6 domain in the interval 218–255 (PYVPCSPSPCQNGGTCRPTGDTTHECACLPGFAGQNCE). O-linked (Fuc...) threonine; alternate glycosylation occurs at T232. O-linked (GalNAc...) threonine; alternate glycosylation occurs at T232. Positions 257-293 (NVDDCPGNNCKNGGACVDGVNTYNCRCPPEWTGQYCT) constitute an EGF-like 7; calcium-binding domain. Residues 295 to 333 (DVDECQLMPNACQNGGTCHNSHGGYNCVCVNGWTGEDCS) enclose the EGF-like 8; calcium-binding domain. T311 carries an O-linked (Fuc...) threonine glycan. An EGF-like 9; calcium-binding domain is found at 335 to 371 (NIDDCASAACFQGATCHDRVASFYCECPHGRTGLLCH). An O-linked (Glc...) serine glycan is attached at S341. T349 is a glycosylation site (O-linked (Fuc...) threonine). The EGF-like 10 domain occupies 372-410 (LNDACISNPCNEGSNCDTNPVNGKAICTCPSGYTGPACS). A glycan (O-linked (Glc...) serine) is linked at S378. Positions 412–450 (DVDECALGANPCEHAGKCLNTLGSFECQCLQGYTGPRCE) constitute an EGF-like 11; calcium-binding domain. The interaction with DLL4 stretch occupies residues 420–421 (AN). T432 and S435 together coordinate Ca(2+). Residue S435 is glycosylated (O-linked (Glc...) serine). Residues 448–452 (RCEID) form an interaction with DLL4 region. Residues D452, V453, and E455 each coordinate Ca(2+). An EGF-like 12; calcium-binding domain is found at 452–488 (DVNECISNPCQNDATCLDQIGEFQCICMPGYEGVYCE). 3 disulfides stabilise this stretch: C456–C467, C461–C476, and C478–C487. O-linked (Glc...) serine glycosylation is present at S458. T466 carries O-linked (Fuc...) threonine glycosylation. 2 residues coordinate Ca(2+): D469 and Q470. Residues N490, T491, and E493 each coordinate Ca(2+). One can recognise an EGF-like 13; calcium-binding domain in the interval 490–526 (NTDECASSPCLHNGRCVDKINEFLCQCPKGFSGHLCQ). Intrachain disulfides connect C494/C505, C499/C514, C516/C525, C532/C543, C537/C552, C554/C563, C570/C580, C575/C589, C591/C600, C607/C618, C612/C627, C629/C638, C645/C655, C650/C664, C666/C675, C682/C693, C687/C702, C704/C713, C720/C730, C725/C739, C741/C750, C757/C768, C762/C777, C779/C788, C795/C806, C800/C815, C817/C826, C833/C844, C838/C855, C857/C866, C873/C884, C878/C893, C895/C904, C911/C922, C916/C931, C933/C942, C949/C960, C954/C969, C971/C980, C987/C998, C992/C1007, C1009/C1018, C1025/C1036, C1030/C1045, C1047/C1056, C1063/C1074, C1068/C1083, C1085/C1094, C1101/C1122, C1116/C1131, C1133/C1142, C1149/C1160, C1154/C1169, C1171/C1180, C1187/C1198, C1192/C1207, C1209/C1218, C1225/C1244, C1238/C1253, C1255/C1264, C1271/C1284, C1276/C1293, C1295/C1304, C1311/C1322, C1316/C1334, C1336/C1345, C1352/C1363, C1357/C1372, C1374/C1383, C1391/C1403, C1397/C1414, C1416/C1425, C1449/C1472, C1454/C1467, and C1463/C1479. An O-linked (Glc...) serine glycan is attached at S496. Residues D507 and K508 each coordinate Ca(2+). Residues 528–564 (DVDECASTPCKNGAKCLDGPNTYTCVCTEGYTGTHCE) enclose the EGF-like 14; calcium-binding domain. O-linked (Glc...) serine glycosylation is present at S534. The EGF-like 15; calcium-binding domain maps to 566–601 (DIDECDPDPCHYGLCKDGVATFTCLCQPGYTGHHCE). The EGF-like 16; calcium-binding domain occupies 603 to 639 (NINECHSQPCRHGGTCQDRDNYYLCLCLKGTTGPNCE). The O-linked (Glc...) serine glycan is linked to S609. Residue T617 is glycosylated (O-linked (Fuc...) threonine). The region spanning 641–676 (NLDDCASNPCDSGTCLDKIDGYECACEPGYTGSMCN) is the EGF-like 17; calcium-binding domain. S647 is a glycosylation site (O-linked (Glc...) serine). Residues 678–714 (NIDECAGSPCHNGGTCEDGIAGFTCRCPEGYHDPTCL) enclose the EGF-like 18; calcium-binding domain. T692 carries an O-linked (Fuc...) threonine glycan. An EGF-like 19; calcium-binding domain is found at 716–751 (EVNECNSNPCIHGACRDGLNGYKCDCAPGWSGTNCD). S722 carries an O-linked (Glc...) serine glycan. An EGF-like 20; calcium-binding domain is found at 753–789 (NNNECESNPCVNGGTCKDMTSGYVCTCREGFSGPNCQ). S759 carries O-linked (Glc...) serine glycosylation. T767 carries an O-linked (Fuc...) threonine glycan. O-linked (GlcNAc) serine glycosylation occurs at S784. The 37-residue stretch at 791–827 (NINECASNPCLNQGTCIDDVAGYKCNCPLPYTGATCE) folds into the EGF-like 21; calcium-binding domain. S797 carries O-linked (Glc...) serine glycosylation. T805 carries O-linked (Fuc...) threonine glycosylation. One can recognise an EGF-like 22 domain in the interval 829-867 (VLAPCATSPCKNSGVCKESEDYESFSCVCPTGWQGQTCE). The 37-residue stretch at 869–905 (DINECVKSPCRHGASCQNTNGSYRCLCQAGYTGRNCE) folds into the EGF-like 23; calcium-binding domain. The N-linked (GlcNAc...) asparagine glycan is linked to N888. O-linked (GlcNAc) threonine glycosylation is present at T900. Residues 907-943 (DIDDCRPNPCHNGGSCTDGVNAAFCDCLPGFQGAFCE) enclose the EGF-like 24 domain. S921 carries O-linked (Fuc) serine glycosylation. Residues 945 to 981 (DINECASNPCQNGANCTDCVDSYTCTCPTGFNGIHCE) form the EGF-like 25; calcium-binding domain. An O-linked (Glc...) serine glycan is attached at S951. N-linked (GlcNAc...) asparagine glycosylation is present at N959. Residues 983–1019 (NTPDCTESSCFNGGTCVDGINSFTCLCPPGFTGSYCQ) enclose the EGF-like 26 domain. A glycan (O-linked (Fuc...) threonine) is linked at T997. The region spanning 1021-1057 (DVNECDSRPCLHGGTCQDSYGTYKCTCPQGYTGLNCQ) is the EGF-like 27; calcium-binding domain. An O-linked (Glc...) serine glycan is attached at S1027. O-linked (Fuc...) threonine glycosylation is present at T1035. EGF-like domains are found at residues 1059-1095 (LVRWCDSAPCKNGGKCWQTNTQYHCECRSGWTGFNCD) and 1097-1143 (LSVS…SYCE). O-linked (Glc...) serine glycosylation is present at S1065. Positions 1145–1181 (EVDECSPNPCQNGATCTDYLGGFSCKCVAGYHGSNCS) constitute an EGF-like 30; calcium-binding domain. O-linked (Fuc...) threonine glycosylation occurs at T1159. N1179 is a glycosylation site (N-linked (GlcNAc...) asparagine). An EGF-like 31; calcium-binding domain is found at 1183–1219 (EINECLSQPCQNGGTCIDLTNTYKCSCPRGTQGVHCE). S1189 carries an O-linked (Glc...) serine glycan. A glycan (O-linked (Fuc...) threonine) is linked at T1197. The 45-residue stretch at 1221-1265 (NVDDCHPPLDPASRSPKCFNNGTCVDQVGGYTCTCPPGFVGERCE) folds into the EGF-like 32; calcium-binding domain. The N-linked (GlcNAc...) asparagine glycan is linked to N1241. 4 consecutive EGF-like domains span residues 1267-1305 (DVNECLSNPCDPRGTQNCVQRVNDFHCECRAGHTGRRCE), 1307-1346 (VINGCRGKPCRNGGVCAVASNTARGFICRCPAGFEGATCE), 1348-1384 (DARTCGSLRCLNGGTCISGPRSPTCLCLGSFTGPECQ), and 1387-1426 (ASSPCVGSNPCYNQGTCEPTSESPFYRCLCPAKFNGLLCH). An O-linked (Glc...) serine glycan is attached at S1273. T1362 carries O-linked (Fuc...) threonine glycosylation. Residue T1379 is glycosylated (O-linked (GlcNAc...) threonine). A glycan (O-linked (Fuc...) threonine; alternate) is linked at T1402. The O-linked (GalNAc...) threonine; alternate glycan is linked to T1402. 3 LNR repeats span residues 1449–1489 (CELP…PWKN), 1490–1531 (CTQS…CNPL), and 1532–1571 (YDQYCKDHFSDGHCDQGCNSAECEWDGLDCAEHVPERLAA). The Ca(2+) site is built by D1457, N1460, D1475, and D1478. The N-linked (GlcNAc...) asparagine glycan is linked to N1489. Intrachain disulfides connect C1490–C1514, C1496–C1509, C1505–C1521, C1536–C1549, and C1545–C1561. Residue N1587 is glycosylated (N-linked (GlcNAc...) asparagine). O-linked (GalNAc...) threonine glycosylation is present at T1715. Residues 1718-1750 (PPLPSQLHLMYVAAAAFVLLFFVGCGVLLSRKR) form an interaction with PSEN1 region. A helical transmembrane segment spans residues 1726 to 1746 (LMYVAAAAFVLLFFVGCGVLL). Topologically, residues 1747–2531 (SRKRRRQHGQ…QITHIPEAFK (785 aa)) are cytoplasmic. Residue K1749 forms a Glycyl lysine isopeptide (Lys-Gly) (interchain with G-Cter in ubiquitin) linkage. The segment at 1770–1798 (KKKRREPLGEDSVGLKPLKNASDGALMDD) is disordered. The residue at position 1851 (T1851) is a Phosphothreonine. 5 ANK repeats span residues 1917–1946 (TGETALHLAARYSRSDAAKRLLEASADANI), 1950–1980 (MGRTPLHAAVSADAQGVFQILLRNRATDLDA), 1984–2013 (DGTTPLILAARLAVEGMLEDLINSHADVNA), 2017–2046 (LGKSALHWAAAVNNVDAAVVLLKNGANKDM), and 2050–2079 (KEETPLFLAAREGSYETAKVLLDHFANRDI). An HIF1AN-binding region spans residues 1937–1945 (LLEASADAN). N1945 carries the post-translational modification (3S)-3-hydroxyasparagine; by HIF1AN. The interval 2004–2012 (LINSHADVN) is HIF1AN-binding. Residue N2012 is modified to (3S)-3-hydroxyasparagine; by HIF1AN. Disordered regions lie at residues 2141–2185 (SATQ…DSSS), 2382–2428 (QPQN…SLPV), and 2440–2531 (PTSL…EAFK). The segment covering 2382–2395 (QPQNLQPPSQPHLS) has biased composition (low complexity). Residues 2440–2478 (PTSLPSSMVPPMTTTQFLTPPSQHSYSSSPVDNTPSHQL) show a composition bias toward polar residues. Over residues 2488–2503 (PSPESPDQWSSSSPHS) the composition is skewed to low complexity. Residues 2504–2524 (NISDWSEGISSPPTSMPSQIT) show a composition bias toward polar residues.

Belongs to the NOTCH family. Heterodimer of a C-terminal fragment N(TM) and an N-terminal fragment N(EC) which are probably linked by disulfide bonds. Interacts with DNER, DTX1, DTX2 and RBPJ/RBPSUH. Also interacts with MAML1, MAML2 and MAML3 which act as transcriptional coactivators for NOTCH1. Notch 1 intracellular domain interacts with SNW1; the interaction involves multimerized NOTCH1 NICD and is implicated in a formation of an intermediate preactivation complex which associates with DNA-bound CBF-1/RBPJ. The activated membrane-bound form interacts with AAK1 which promotes NOTCH1 stabilization. Forms a trimeric complex with FBXW7 and SGK1. Interacts with HIF1AN. HIF1AN negatively regulates the function of notch intracellular domain (NICD), accelerating myogenic differentiation. Interacts (via NICD) with SNAI1 (via zinc fingers); the interaction induces SNAI1 degradation via MDM2-mediated ubiquitination and inhibits SNAI1-induced cell invasion. Interacts (via NICD) with MDM2A. Interacts (via NICD) with BCL6; the interaction decreases MAML1 recruitment by NOTCH1 NICD on target genes DNA and inhibits NOTCH1 transactivation activity. Interacts with THBS4. Interacts (via the EGF-like repeat region) with CCN3 (via CTCK domain). Interacts (via EGF-like domains) with DLL4 (via N-terminal DSL and MNNL domains). Interacts with ZMIZ1. Interacts (via NICD domain) with MEGF10 (via the cytoplasmic domain). Interacts with DLL1 and JAG1. Interacts (via NICD domain) with PRAG1. Forms a complex with PRAG1, N1ICD and MAML1, in a MAML1-dependent manner. Interacts (via transmembrane region) with PSEN1; the interaction is direct. Interacts with ZFP64. Post-translationally, synthesized in the endoplasmic reticulum as an inactive form which is proteolytically cleaved by a furin-like convertase in the trans-Golgi network before it reaches the plasma membrane to yield an active, ligand-accessible form. Cleavage results in a C-terminal fragment N(TM) and a N-terminal fragment N(EC). Following ligand binding, it is cleaved by ADAM17 to yield a membrane-associated intermediate fragment called notch extracellular truncation (NEXT). Following endocytosis, this fragment is then cleaved by one of the catalytic subunits of gamma-secretase (PSEN1 or PSEN2) to release a Notch-derived peptide containing the intracellular domain (NICD) from the membrane. In terms of processing, phosphorylated. O-glycosylated on the EGF-like domains. O-glucosylated at Ser-435 by KDELC1 and KDELC2. Contains both O-linked fucose and O-linked glucose in the EGF-like domains 11, 12 and 13, which are interacting with the residues on DLL4. O-linked glycosylation by GALNT11 is involved in determination of left/right symmetry: glycosylation promotes activation of NOTCH1, possibly by promoting cleavage by ADAM17, modulating the balance between motile and immotile (sensory) cilia at the left-right organiser (LRO). MFNG-, RFNG- and LFNG-mediated modification of O-fucose residues at specific EGF-like domains results in inhibition of its activation by JAG1 and enhancement of its activation by DLL1 via an increased binding to DLL1. Post-translationally, ubiquitinated. Undergoes 'Lys-29'-linked polyubiquitination by ITCH; promotes the lysosomal degradation of non-activated internalized NOTCH1. Deubiquitination by USP12 is required for transport of internalized non-activated receptor from late endosomes to lysosomes for degradation. Monoubiquitination at Lys-1749 is required for activation by gamma-secretase cleavage, it promotes interaction with AAK1, which stabilizes it. Deubiquitination by EIF3F is necessary for nuclear import of activated Notch. In terms of processing, hydroxylated at Asn-1945 and Asn-2012 by HIF1AN. Hydroxylation reduces affinity for HI1AN and may thus indirectly modulate negative regulation of NICD. In terms of tissue distribution, expressed in the brain, kidney and spleen. Expressed in postnatal central nervous system (CNS) germinal zones and, in early postnatal life, within numerous cells throughout the CNS. Found in both subventricular and ventricular germinal zones.

Its subcellular location is the cell membrane. It is found in the late endosome membrane. The protein resides in the nucleus. Its function is as follows. Functions as a receptor for membrane-bound ligands Jagged-1 (JAG1), Jagged-2 (JAG2) and Delta-1 (DLL1) to regulate cell-fate determination. Upon ligand activation through the released notch intracellular domain (NICD) it forms a transcriptional activator complex with RBPJ/RBPSUH and activates genes of the enhancer of split locus. Affects the implementation of differentiation, proliferation and apoptotic programs. Involved in angiogenesis; negatively regulates endothelial cell proliferation and migration and angiogenic sprouting. Involved in the maturation of both CD4(+) and CD8(+) cells in the thymus. Important for follicular differentiation and possibly cell fate selection within the follicle. During cerebellar development, functions as a receptor for neuronal DNER and is involved in the differentiation of Bergmann glia. Represses neuronal and myogenic differentiation. May play an essential role in postimplantation development, probably in some aspect of cell specification and/or differentiation. May be involved in mesoderm development, somite formation and neurogenesis. May enhance HIF1A function by sequestering HIF1AN away from HIF1A. Required for the THBS4 function in regulating protective astrogenesis from the subventricular zone (SVZ) niche after injury. Involved in determination of left/right symmetry by modulating the balance between motile and immotile (sensory) cilia at the left-right organiser (LRO). The polypeptide is Neurogenic locus notch homolog protein 1 (Notch1) (Rattus norvegicus (Rat)).